The sequence spans 237 residues: Ribonuclease PH (237 aa).

Phosphate-binding positions include Arg-86 and 124–126 (GTR).

It belongs to the RNase PH family. As to quaternary structure, homohexameric ring arranged as a trimer of dimers.

It catalyses the reaction tRNA(n+1) + phosphate = tRNA(n) + a ribonucleoside 5'-diphosphate. Phosphorolytic 3'-5' exoribonuclease that plays an important role in tRNA 3'-end maturation. Removes nucleotide residues following the 3'-CCA terminus of tRNAs; can also add nucleotides to the ends of RNA molecules by using nucleoside diphosphates as substrates, but this may not be physiologically important. Probably plays a role in initiation of 16S rRNA degradation (leading to ribosome degradation) during starvation. In Tolumonas auensis (strain DSM 9187 / NBRC 110442 / TA 4), this protein is Ribonuclease PH.